Here is a 212-residue protein sequence, read N- to C-terminus: Thaumatin-like protein 1b (212 aa).

7 disulfides stabilise this stretch: C47–C57, C62–C69, C117–C200, C122–C183, C130–C146, C150–C159, and C160–C170.

It belongs to the thaumatin family.

It localises to the secreted. The protein is Thaumatin-like protein 1b of Malus domestica (Apple).